A 63-amino-acid chain; its full sequence is Large ribosomal subunit protein bL35 (63 aa).

This sequence belongs to the bacterial ribosomal protein bL35 family.

This Campylobacter jejuni subsp. doylei (strain ATCC BAA-1458 / RM4099 / 269.97) protein is Large ribosomal subunit protein bL35.